Consider the following 177-residue polypeptide: Large ribosomal subunit protein uL30 (177 aa).

Belongs to the universal ribosomal protein uL30 family. In terms of assembly, part of the 50S ribosomal subunit.

This is Large ribosomal subunit protein uL30 from Pyrobaculum islandicum (strain DSM 4184 / JCM 9189 / GEO3).